The sequence spans 505 residues: Deoxyguanosinetriphosphate triphosphohydrolase (505 aa).

The region spanning 66–273 (RLTHSLEVQQ…MEAADDISYC (208 aa)) is the HD domain.

It belongs to the dGTPase family. Type 1 subfamily. Homotetramer. The cofactor is Mg(2+).

The enzyme catalyses dGTP + H2O = 2'-deoxyguanosine + triphosphate + H(+). Its function is as follows. dGTPase preferentially hydrolyzes dGTP over the other canonical NTPs. This is Deoxyguanosinetriphosphate triphosphohydrolase from Yersinia enterocolitica serotype O:8 / biotype 1B (strain NCTC 13174 / 8081).